Reading from the N-terminus, the 475-residue chain is UDP-glucosyltransferase UGT13248 (475 aa).

Residues 1 to 17 (METTVTAVSGTTSSSVG) show a composition bias toward low complexity. Positions 1-20 (METTVTAVSGTTSSSVGHGA) are disordered. UDP-alpha-D-glucose contacts are provided by residues His-38, Ser-152, Thr-299, Cys-352, 369–377 (HCGWNSTLE), and 393–394 (DQ).

The protein belongs to the UDP-glycosyltransferase family.

Functionally, involved in the detoxification of the Fusarium mycotoxin deoxynivalenol by the transfer of glucose from UDP-D-glucose to the hydroxyl group at C-3, forming deoxynivalenol-3-O-beta-D-glucoside. The protein is UDP-glucosyltransferase UGT13248 of Hordeum vulgare subsp. vulgare (Domesticated barley).